A 456-amino-acid chain; its full sequence is Adenylosuccinate lyase (456 aa).

N(6)-(1,2-dicarboxyethyl)-AMP-binding positions include 15 to 16, 90 to 92, and 122 to 123; these read RY, NHD, and TS. The Proton donor/acceptor role is filled by His171. Gln248 is a binding site for N(6)-(1,2-dicarboxyethyl)-AMP. Ser296 functions as the Proton donor/acceptor in the catalytic mechanism. N(6)-(1,2-dicarboxyethyl)-AMP-binding positions include Ser297, 302 to 304, Asn310, Arg336, and 341 to 345; these read KVN and STVLR.

Belongs to the lyase 1 family. Adenylosuccinate lyase subfamily. As to quaternary structure, homotetramer.

It catalyses the reaction N(6)-(1,2-dicarboxyethyl)-AMP = fumarate + AMP. The catalysed reaction is (2S)-2-[5-amino-1-(5-phospho-beta-D-ribosyl)imidazole-4-carboxamido]succinate = 5-amino-1-(5-phospho-beta-D-ribosyl)imidazole-4-carboxamide + fumarate. It carries out the reaction (2S)-2-amino-2'-deoxyadenylo-succinate = dZMP + fumarate. Its pathway is purine metabolism; AMP biosynthesis via de novo pathway; AMP from IMP: step 2/2. It functions in the pathway purine metabolism; IMP biosynthesis via de novo pathway; 5-amino-1-(5-phospho-D-ribosyl)imidazole-4-carboxamide from 5-amino-1-(5-phospho-D-ribosyl)imidazole-4-carboxylate: step 2/2. It participates in purine metabolism. In terms of biological role, catalyzes two reactions in de novo purine nucleotide biosynthesis. Catalyzes the breakdown of 5-aminoimidazole- (N-succinylocarboxamide) ribotide (SAICAR or 2-[5-amino-1-(5-phospho-beta-D-ribosyl)imidazole-4-carboxamido]succinate) to 5-aminoimidazole-4-carboxamide ribotide (AICAR or 5-amino-1-(5-phospho-beta-D-ribosyl)imidazole-4-carboxamide) and fumarate, and of adenylosuccinate (ADS or N(6)-(1,2-dicarboxyethyl)-AMP) to adenosine monophosphate (AMP) and fumarate. Functionally, (Microbial infection) Catalyzes the conversion of 2-amino-2'-deoxyadenylo-succinate to dZMP and fumarate, when the bacterium is infected by a phage that produces the substrate of this reaction, a step in the synthesis of dZTP (2-amino-2'-deoxyadenosine 5'-triphosphate), which is a nucleotide then used by the phage as a DNA polymerase substrate. The polypeptide is Adenylosuccinate lyase (Vibrio cholerae serotype O1 (strain ATCC 39541 / Classical Ogawa 395 / O395)).